The chain runs to 640 residues: Protein SPT10 (640 aa).

The tract at residues 1–30 is disordered; the sequence is MLNQHTSSVPDDEHLQMAHQNSSSEVRNEA. The 139-residue stretch at 121–259 folds into the N-acetyltransferase domain; sequence LDYSMDTEAD…AGILKGFDVP (139 aa). The segment at 534-565 is disordered; sequence PHLTNNESQDHANPVNRDERDMNHSVPDLDRN. The segment covering 549-565 has biased composition (basic and acidic residues); the sequence is NRDERDMNHSVPDLDRN.

Functionally, required for normal transcription at a number of loci in yeast. Affects transcription at Ty1 elements, at PHO5, STE6 and ADH2. The chain is Protein SPT10 (SPT10) from Saccharomyces cerevisiae (strain ATCC 204508 / S288c) (Baker's yeast).